A 240-amino-acid polypeptide reads, in one-letter code: 4-hydroxy-tetrahydrodipicolinate reductase (240 aa).

Residues 79 to 81 (ATT) and 103 to 106 (SANM) contribute to the NAD(+) site. H135 functions as the Proton donor/acceptor in the catalytic mechanism. H136 lines the (S)-2,3,4,5-tetrahydrodipicolinate pocket. Catalysis depends on K139, which acts as the Proton donor. Residue 145 to 146 (GT) participates in (S)-2,3,4,5-tetrahydrodipicolinate binding.

This sequence belongs to the DapB family.

Its subcellular location is the cytoplasm. The catalysed reaction is (S)-2,3,4,5-tetrahydrodipicolinate + NAD(+) + H2O = (2S,4S)-4-hydroxy-2,3,4,5-tetrahydrodipicolinate + NADH + H(+). It carries out the reaction (S)-2,3,4,5-tetrahydrodipicolinate + NADP(+) + H2O = (2S,4S)-4-hydroxy-2,3,4,5-tetrahydrodipicolinate + NADPH + H(+). The protein operates within amino-acid biosynthesis; L-lysine biosynthesis via DAP pathway; (S)-tetrahydrodipicolinate from L-aspartate: step 4/4. Functionally, catalyzes the conversion of 4-hydroxy-tetrahydrodipicolinate (HTPA) to tetrahydrodipicolinate. The chain is 4-hydroxy-tetrahydrodipicolinate reductase from Staphylococcus saprophyticus subsp. saprophyticus (strain ATCC 15305 / DSM 20229 / NCIMB 8711 / NCTC 7292 / S-41).